The sequence spans 177 residues: Adenine phosphoribosyltransferase (177 aa).

The protein belongs to the purine/pyrimidine phosphoribosyltransferase family. Homodimer.

It is found in the cytoplasm. It carries out the reaction AMP + diphosphate = 5-phospho-alpha-D-ribose 1-diphosphate + adenine. It participates in purine metabolism; AMP biosynthesis via salvage pathway; AMP from adenine: step 1/1. Its function is as follows. Catalyzes a salvage reaction resulting in the formation of AMP, that is energically less costly than de novo synthesis. This chain is Adenine phosphoribosyltransferase, found in Leptospira biflexa serovar Patoc (strain Patoc 1 / Ames).